Consider the following 525-residue polypeptide: Peptide chain release factor 3 (525 aa).

The region spanning 8 to 276 (AMRRTFAIIS…AFVKEAPPPQ (269 aa)) is the tr-type G domain. Residues 17-24 (SHPDAGKT), 85-89 (DTPGH), and 139-142 (NKMD) contribute to the GTP site.

It belongs to the TRAFAC class translation factor GTPase superfamily. Classic translation factor GTPase family. PrfC subfamily.

The protein resides in the cytoplasm. Functionally, increases the formation of ribosomal termination complexes and stimulates activities of RF-1 and RF-2. It binds guanine nucleotides and has strong preference for UGA stop codons. It may interact directly with the ribosome. The stimulation of RF-1 and RF-2 is significantly reduced by GTP and GDP, but not by GMP. The sequence is that of Peptide chain release factor 3 from Coxiella burnetii (strain RSA 331 / Henzerling II).